Consider the following 520-residue polypeptide: Probable methylmalonate-semialdehyde/malonate-semialdehyde dehydrogenase [acylating], mitochondrial (520 aa).

Positions 169, 171, 195, 198, 199, and 248 each coordinate NAD(+). Cysteine 303 (nucleophile) is an active-site residue. NAD(+) is bound at residue glutamate 403.

Belongs to the aldehyde dehydrogenase family. In terms of assembly, homotetramer.

It is found in the mitochondrion. The catalysed reaction is 2-methyl-3-oxopropanoate + NAD(+) + CoA + H2O = propanoyl-CoA + hydrogencarbonate + NADH + H(+). The enzyme catalyses 3-oxopropanoate + NAD(+) + CoA + H2O = hydrogencarbonate + acetyl-CoA + NADH + H(+). Its function is as follows. Probable malonate and methylmalonate semialdehyde dehydrogenase involved in the catabolism of valine, thymine, and compounds catabolized by way of beta-alanine, including uracil and cytidine. The chain is Probable methylmalonate-semialdehyde/malonate-semialdehyde dehydrogenase [acylating], mitochondrial from Drosophila pseudoobscura pseudoobscura (Fruit fly).